A 353-amino-acid polypeptide reads, in one-letter code: Ribosome biogenesis protein BRX1 homolog (353 aa).

Positions 1–10 (MAATKRKRRG) are enriched in basic residues. Residues 1–46 (MAATKRKRRGGLAVQAKKLKRDAKDGKLPAKANDVSEEAAEEEKDR) are disordered. The region spanning 60 to 249 (ERILIFSSRG…LIKIFQGSFG (190 aa)) is the Brix domain. A Glycyl lysine isopeptide (Lys-Gly) (interchain with G-Cter in SUMO2) cross-link involves residue Lys160. Ser261 carries the post-translational modification Phosphoserine. The residue at position 276 (Lys276) is an N6-acetyllysine. Glycyl lysine isopeptide (Lys-Gly) (interchain with G-Cter in SUMO2) cross-links involve residues Lys314 and Lys322.

Belongs to the BRX1 family.

It localises to the nucleus. Its subcellular location is the nucleolus. Its function is as follows. Required for biogenesis of the 60S ribosomal subunit. The sequence is that of Ribosome biogenesis protein BRX1 homolog (BRIX1) from Bos taurus (Bovine).